The chain runs to 424 residues: Vasopressin V1b receptor (424 aa).

Residues 1-22 are disordered; it reads MDSGPLWDANPTPRGTLSAPNA. Residues 1 to 35 lie on the Extracellular side of the membrane; sequence MDSGPLWDANPTPRGTLSAPNATTPWLGRDEELAK. Over residues 13-22 the composition is skewed to polar residues; that stretch reads PRGTLSAPNA. The N-linked (GlcNAc...) asparagine glycan is linked to Asn-21. A helical membrane pass occupies residues 36–59; it reads VEIGVLATVLVLATGGNLAVLLTL. Topologically, residues 60–71 are cytoplasmic; it reads GQLGRKRSRMHL. The chain crosses the membrane as a helical span at residues 72-93; it reads FVLHLALTDLAVALFQVLPQLL. Residues 94-108 lie on the Extracellular side of the membrane; that stretch reads WDITYRFQGPDLLCR. A disulfide bridge links Cys-107 with Cys-186. Residues 109 to 130 traverse the membrane as a helical segment; sequence AVKYLQVLSMFASTYMLLAMTL. At 131 to 151 the chain is on the cytoplasmic side; it reads DRYLAVCHPLRSLQQPGQSTY. Residues 152-173 form a helical membrane-spanning segment; sequence LLIAAPWLLAAIFSLPQVFIFS. Topologically, residues 174-201 are extracellular; that stretch reads LREVIQGSGVLDCWADFGFPWGPRAYLT. A helical transmembrane segment spans residues 202-222; the sequence is WTTLAIFVLPVTMLTACYSLI. Topologically, residues 223-283 are cytoplasmic; the sequence is CHEICKNLKV…RAKIRTVKMT (61 aa). Residues 284 to 303 traverse the membrane as a helical segment; it reads FVIVLAYIACWAPFFSVQMW. Residues 304 to 321 lie on the Extracellular side of the membrane; that stretch reads SVWDKNAPDEDSTNVAFT. The chain crosses the membrane as a helical span at residues 322 to 341; the sequence is ISMLLGNLNSCCNPWIYMGF. Over 342–424 the chain is Cytoplasmic; that stretch reads NSHLLPRPLR…GEGTAETIIF (83 aa). Residues 398–417 are disordered; that stretch reads SGRPRPEESPRDLELADGEG. A compositionally biased stretch (basic and acidic residues) spans 401–411; the sequence is PRPEESPRDLE.

The protein belongs to the G-protein coupled receptor 1 family. Vasopressin/oxytocin receptor subfamily.

The protein localises to the cell membrane. Functionally, receptor for arginine vasopressin. The activity of this receptor is mediated by G proteins which activate a phosphatidyl-inositol-calcium second messenger system. (Microbial infection) During SARS coronavirus-2/SARS-CoV-2 infection, may recognize and internalize the complex formed by AVP/Arg-vasopressin, SARS-CoV-2 spike protein and secreted ACE2 through DNM2/dynamin 2-dependent endocytosis. This is Vasopressin V1b receptor from Homo sapiens (Human).